A 255-amino-acid polypeptide reads, in one-letter code: Hemin import ATP-binding protein HmuV (255 aa).

The 237-residue stretch at 2 to 238 (LRVENLSIRR…EPLRAVFGLE (237 aa)) folds into the ABC transporter domain. Residue 34–41 (GPNGAGKS) participates in ATP binding.

This sequence belongs to the ABC transporter superfamily. Heme (hemin) importer (TC 3.A.1.14.5) family. In terms of assembly, the complex is composed of two ATP-binding proteins (HmuV), two transmembrane proteins (HmuU) and a solute-binding protein (HmuT).

The protein resides in the cell inner membrane. Functionally, part of the ABC transporter complex HmuTUV involved in hemin import. Responsible for energy coupling to the transport system. The sequence is that of Hemin import ATP-binding protein HmuV from Pseudomonas aeruginosa (strain ATCC 15692 / DSM 22644 / CIP 104116 / JCM 14847 / LMG 12228 / 1C / PRS 101 / PAO1).